The chain runs to 89 residues: Small ribosomal subunit protein uS15 (89 aa).

It belongs to the universal ribosomal protein uS15 family. As to quaternary structure, part of the 30S ribosomal subunit. Forms a bridge to the 50S subunit in the 70S ribosome, contacting the 23S rRNA.

In terms of biological role, one of the primary rRNA binding proteins, it binds directly to 16S rRNA where it helps nucleate assembly of the platform of the 30S subunit by binding and bridging several RNA helices of the 16S rRNA. Forms an intersubunit bridge (bridge B4) with the 23S rRNA of the 50S subunit in the ribosome. The sequence is that of Small ribosomal subunit protein uS15 from Allorhizobium ampelinum (strain ATCC BAA-846 / DSM 112012 / S4) (Agrobacterium vitis (strain S4)).